A 658-amino-acid polypeptide reads, in one-letter code: Putative phospholipase B-like lamina ancestor (658 aa).

The N-terminal stretch at 1 to 29 (MLKVVGASWQKTRIGTYILIGAGLLVIGA) is a signal peptide. Residues Asn229, Asn465, and Asn486 are each glycosylated (N-linked (GlcNAc...) asparagine).

This sequence belongs to the phospholipase B-like family. Expressed in neural and glial progenitors prior to, but not after, differentiation. Not expressed in late third instar disks, but is expressed uniformly by early third instar disks, in the imaginal ring of the proventriculus and in the salivary gland.

It localises to the secreted. Functionally, putative phospholipase. Involved in the regulation of cellular plasticity in imaginal disks. The sequence is that of Putative phospholipase B-like lamina ancestor (lama) from Drosophila melanogaster (Fruit fly).